The chain runs to 780 residues: Cullin-5 (780 aa).

Ser-34 bears the Phosphoserine mark. Thr-210 carries the post-translational modification Phosphothreonine. Residues 711–772 form the Cullin neddylation domain; sequence RILRTQEAII…HKYIRRDESD (62 aa). Residue Lys-724 forms a Glycyl lysine isopeptide (Lys-Gly) (interchain with G-Cter in NEDD8) linkage.

This sequence belongs to the cullin family. Component of multiple cullin-5-RING E3 ubiquitin-protein ligase complexes (ECS complexes, also named CRL5 complexes) formed of CUL5, Elongin BC (ELOB and ELOC), RNF7/RBX2 and a variable SOCS box domain-containing protein as substrate-specific recognition component. CUL5-containing ECS complexes specifically contain RNF7/RBX2, and not RBX1, as catalytic subunit. Component of the ECS(ASB2) complex with the substrate recognition component ASB2. Component of the ECS(ASB6) complex with the substrate recognition component ASB6. Component of the ECS(ASB7) complex with the substrate recognition component ASB7. Component of the ECS(ASB9) complex with the substrate recognition component ASB9. Component of the ECS(ASB11) complex with the substrate recognition component ASB11. Component of the ECS(ASB12) complex with the substrate recognition component ASB12. Component of the ECS(LRRC41) complex with the substrate recognition component LRRC41. Component of the ECS(SOCS1) complex with the substrate recognition component SOCS1. Component of the ECS(SOCS2) complex with the substrate recognition component SOCS2. Component of the ECS(WSB1) complex with the substrate recognition subunit WSB1. Component of the ECS(SOCS3) complex with the substrate recognition component SOCS3. Component of the ECS(SOCS7) complex with the substrate recognition component SOCS7. Component of the ECS(SPSB1) complex with the substrate recognition component SPSB1. Component of the ECS(SPSB3) complex with the substrate recognition component SPSB3. Component of the ECS(SPSB2) complex with the substrate recognition component SPSB2. Component of the ECS(SPSB4) complex with the substrate recognition component SPSB4. Component of the ECS(RAB40) complex with the substrate recognition subunit RAB40A, RAB40B or RAB40C. Component of the ECS(KLHDC1) complex with the substrate recognition component KLHDC1. Component of the ECS(PCMTD1) complex with the substrate recognition subunit PCMTD1. May also form complexes containing RBX1 and ELOA or VHL; additional evidence is however required to confirm this result in vivo. Interacts (when neddylated) with ARIH2; leading to activate the E3 ligase activity of ARIH2. Interacts with ERCC6; the interaction is induced by DNA damaging agents or inhibitors of RNA polymerase II elongation. Interacts with ELOA (via the BC-box). Interacts (unneddylated form) with DCUN1D1, DCUN1D2, DCUN1D3, DCUN1D4 and DCUN1D5; these interactions promote the cullin neddylation. Post-translationally, neddylated; which enhances the ubiquitination activity of ECS complexes and prevents binding of the inhibitor CAND1. Deneddylated via its interaction with the COP9 signalosome (CSN).

The protein resides in the nucleus. It participates in protein modification; protein ubiquitination. Functionally, core component of multiple cullin-5-RING E3 ubiquitin-protein ligase complexes (ECS complexes, also named CRL5 complexes), which mediate the ubiquitination and subsequent proteasomal degradation of target proteins. Acts a scaffold protein that contributes to catalysis through positioning of the substrate and the ubiquitin-conjugating enzyme. The functional specificity of the E3 ubiquitin-protein ligase complex depends on the variable SOCS box-containing substrate recognition component. Acts as a key regulator of neuron positioning during cortex development: component of various SOCS-containing ECS complexes, such as the ECS(SOCS7) complex, that regulate reelin signaling by mediating ubiquitination and degradation of DAB1. ECS(SOCS1) seems to direct ubiquitination of JAK2. The ECS(SOCS2) complex mediates the ubiquitination and subsequent proteasomal degradation of phosphorylated EPOR and GHR. The ECS(SPSB3) complex catalyzes ubiquitination of nuclear CGAS. ECS(KLHDC1) complex is part of the DesCEND (destruction via C-end degrons) pathway and mediates ubiquitination and degradation of truncated SELENOS selenoprotein produced by failed UGA/Sec decoding, which ends with a glycine. The ECS(ASB9) complex mediates ubiquitination and degradation of CKB. As part of some ECS complex, promotes 'Lys-11'-linked ubiquitination and degradation of BTRC. As part of a multisubunit ECS complex, polyubiquitinates monoubiquitinated POLR2A. As part of the ECS(RAB40C) complex, mediates ANKRD28 ubiquitination and degradation, thereby regulating protein phosphatase 6 (PP6) complex activity and focal adhesion assembly during cell migration. As part of the ECS(RAB40A) complex, mediates RHOU 'Lys-48'-linked ubiquitination and degradation, thus inhibiting focal adhesion disassembly during cell migration. As part of the ECS(RAB40B) complex, mediates LIMA1/EPLIN and RAP2 ubiquitination, thereby regulating actin cytoskeleton dynamics and stress fiber formation during cell migration. May form a cell surface vasopressin receptor. The chain is Cullin-5 from Pongo abelii (Sumatran orangutan).